The sequence spans 4473 residues: Plectin (4473 aa).

2 Calponin-homology (CH) domains span residues 1–74 and 87–192; these read DGHN…LHFQ and MTAK…DAMP. The segment at 1–192 is actin-binding; it reads DGHNLISLLE…YVSSLYDAMP (192 aa). The tract at residues 1 to 1259 is globular 1; that stretch reads DGHNLISLLE…SELTTLTSQY (1259 aa). The Spectrin 1 repeat unit spans residues 449–508; it reads RYLQDLLAWVEENQRRIDSAEWGVDLPSVEAQLGSHRGMHQSIEEFRAKIERARNDESQL. Ser-509 bears the Phosphoserine mark. 2 Spectrin repeats span residues 529–613 and 626–719; these read KLLN…REDH and LQTQ…AIVQ. Thr-604 is subject to Phosphothreonine. The SH3 domain occupies 730–787; sequence RGHVPLMAVCDYKQVEVTVHKGDQCQLVGPAQPSHWKVLRGPSSEAAVPSVCFLVPPP. Residue Ser-836 is modified to Phosphoserine. One copy of the Spectrin 4 repeat lies at 1104–1204; the sequence is RERVNQLLER…QKFAKQYINA (101 aa). Ser-1224 is subject to Phosphoserine. Positions 1258–2548 form a coiled coil; sequence QYIKFISETL…EEIAATQAAA (1291 aa). The tract at residues 1260-2544 is central fibrous rod domain; the sequence is IKFISETLRR…LAHSEEIAAT (1285 aa). 2 disordered regions span residues 1274 to 1293 and 1407 to 1434; these read ERLA…EGEA and RAEE…DESQ. Position 1510 is a phosphoserine (Ser-1510). Lys-1514 carries the post-translational modification N6-acetyllysine. Disordered stretches follow at residues 1529–1550, 1582–1616, 1881–1929, 1950–1971, and 2003–2098; these read VTQL…ERAR, SLAQ…RELA, AEDT…AARQ, LRER…AAQK, and ERLR…KHKK. Basic and acidic residues-rich tracts occupy residues 1587-1616, 1881-1897, and 1905-1917; these read DAEK…RELA, AEDT…EAAR, and EEQR…ERVQ. Positions 1959–1968 are enriched in low complexity; the sequence is ARQLQLAQEA. Positions 2003-2047 are enriched in basic and acidic residues; the sequence is ERLRGEAEAARRAAEEAEEAREQAEREAAQSRKQVEEAERLKQSA. The segment covering 2048 to 2061 has biased composition (low complexity); sequence EEQAQARAQAQAAA. The span at 2062 to 2077 shows a compositional bias: basic and acidic residues; sequence EKLRKEAEQEAARRAQ. The residue at position 2420 (Ser-2420) is a Phosphoserine. N6-acetyllysine is present on Lys-2425. A disordered region spans residues 2457–2476; that stretch reads REEQQRQQRQMEQEKQELVA. The segment at 2545-4473 is globular 2; it reads QAAAAKALPN…SLGGPESAVA (1929 aa). 2 positions are modified to phosphoserine: Ser-2563 and Ser-2591. Plectin repeat units lie at residues 2615-2652, 2653-2690, 2691-2728, 2729-2766, and 2770-2804; these read RQYL…PGTA, LILL…PELH, HKLL…RDHA, IRLL…EEMS, and ADPG…PETG. A Phosphothreonine modification is found at Thr-2675. Tyr-2822 is modified (phosphotyrosine). Lys-2842 and Lys-2880 each carry N6-acetyllysine. 5 Plectin repeats span residues 2905 to 2942, 2943 to 2980, 2981 to 3018, 3019 to 3056, and 3057 to 3094; these read ALVP…ADSV, RRAL…PDVA, VALL…PELH, EKLL…REQG, and LRLL…KETN. Tyr-3151 carries the post-translational modification Phosphotyrosine. Lys-3209 is modified (N6-acetyllysine). Plectin repeat units follow at residues 3274 to 3311, 3312 to 3349, 3350 to 3387, 3388 to 3425, and 3429 to 3463; these read RTLL…PSTA, TLLL…PELH, EKLL…REHA, IRLL…EEMS, and ADPS…PETG. Thr-3574 bears the Phosphothreonine mark. Tyr-3579 is modified (phosphotyrosine). 6 Plectin repeats span residues 3609–3646, 3647–3684, 3685–3722, 3723–3760, 3764–3797, and 3800–3834; these read WRYL…AEVA, RLLL…PELH, DRLL…AEEA, LRLL…KDTH, SEPS…DGSG, and LLPL…EATA. Thr-3819 bears the Phosphothreonine mark. At Ser-3843 the chain carries Phosphoserine. Plectin repeat units lie at residues 3852 to 3889, 3890 to 3927, 3928 to 3965, 3966 to 4003, 4007 to 4041, and 4043 to 4094; these read QKFL…PGTA, FELL…PEFK, DRLL…KDHG, IRLL…EEMN, TDPS…PQTG, and RLLP…HQTY. The interval 4039 to 4089 is binding to intermediate filaments; that stretch reads QTGLRLLPLKEKKRERKTSSKSSVRKRRVVIVDPETSKEMSVYEAYRKGLI. A phosphoserine mark is found at Ser-4171, Ser-4173, Ser-4174, Ser-4175, Ser-4178, Ser-4179, Ser-4180, and Ser-4181. Phosphotyrosine is present on Tyr-4182. Phosphoserine is present on residues Ser-4185, Ser-4189, and Ser-4195. Plectin repeat units lie at residues 4197-4234, 4235-4272, 4273-4310, 4311-4348, and 4349-4386; these read SDPT…NITG, QRLL…KIMV, DRIN…YEAG, QRFL…ARTA, and QKLR…EGTG. Thr-4200 is subject to Phosphothreonine. Thr-4328 is subject to Phosphothreonine; by CDK1. A phosphoserine mark is found at Ser-4396 and Ser-4402. Low complexity predominate over residues 4400–4460; that stretch reads YYSPYSVSGS…SGYGRRYASG (61 aa). Residues 4400–4473 form a disordered region; that stretch reads YYSPYSVSGS…SLGGPESAVA (74 aa). Tyr-4404 is modified (phosphotyrosine). Phosphoserine occurs at positions 4405, 4407, and 4411. Thr-4412 bears the Phosphothreonine mark. A 4 X 4 AA tandem repeats of G-S-R-X region spans residues 4414-4429; sequence GSRTGSRTGSRAGSRR. Phosphoserine is present on Ser-4415. Arg-4416 and Arg-4429 each carry omega-N-methylarginine. Residues Ser-4431 and Ser-4464 each carry the phosphoserine modification.

Belongs to the plakin or cytolinker family. As to quaternary structure, homodimer or homotetramer. Interacts (via actin-binding domain) with SYNE3. Interacts (via calponin-homology (CH) 1 domain) with VIM (via rod region). Interacts (via N-terminus) with DST isoform 2 (via N-terminus). Interacts with FER. Interacts with TOR1A. Interacts with ANK3. Identified in complexes that contain VIM, EZR, AHNAK, BFSP1, BFSP2, ANK2, PLEC, PRX and spectrin. Post-translationally, phosphorylated by CDK1; regulates dissociation from intermediate filaments during mitosis.

It localises to the cytoplasm. Its subcellular location is the cytoskeleton. It is found in the cell junction. The protein resides in the hemidesmosome. The protein localises to the cell projection. It localises to the podosome. Its function is as follows. Interlinks intermediate filaments with microtubules and microfilaments and anchors intermediate filaments to desmosomes or hemidesmosomes. May be involved not only in the cross-linking and stabilization of cytoskeletal intermediate filaments network, but also in the regulation of their dynamics. This chain is Plectin (PLEC), found in Cricetulus griseus (Chinese hamster).